The sequence spans 180 residues: Large ribosomal subunit protein uL5 (180 aa).

Belongs to the universal ribosomal protein uL5 family. In terms of assembly, part of the 50S ribosomal subunit; part of the 5S rRNA/L5/L18/L25 subcomplex. Contacts the 5S rRNA and the P site tRNA. Forms a bridge to the 30S subunit in the 70S ribosome.

Functionally, this is one of the proteins that bind and probably mediate the attachment of the 5S RNA into the large ribosomal subunit, where it forms part of the central protuberance. In the 70S ribosome it contacts protein S13 of the 30S subunit (bridge B1b), connecting the 2 subunits; this bridge is implicated in subunit movement. Contacts the P site tRNA; the 5S rRNA and some of its associated proteins might help stabilize positioning of ribosome-bound tRNAs. The protein is Large ribosomal subunit protein uL5 of Oenococcus oeni (strain ATCC BAA-331 / PSU-1).